An 80-amino-acid polypeptide reads, in one-letter code: Metallothionein-like protein type 2, MT2-22 (80 aa).

Belongs to the metallothionein superfamily. Type 15 family.

Metallothioneins have a high content of cysteine residues that bind various heavy metals. The chain is Metallothionein-like protein type 2, MT2-22 from Brassica juncea (Indian mustard).